We begin with the raw amino-acid sequence, 234 residues long: MAIEKKFITDGVRNVRVEKFLTKELKRAGYGGMDIARTPLGTQVTIFAEKPGIVIGKGGKQVRQLTQDLATDYDIESPQVEVQQVQNPNFNAQIMAERLANALERGWYFRKAGSSTIRRIMESGALGCEVIVAGKLTGSRSRTQKFTEGYIKHCGEPSETIVEKGYALAIKKLGTIGVQVKIVPPDARLPDAFDVLEPEPKKAPAEPIEPEEVGDDVFEEEFEETSEEEYVEEV.

Residues 17–86 form the KH type-2 domain; it reads VEKFLTKELK…SPQVEVQQVQ (70 aa).

It belongs to the universal ribosomal protein uS3 family. In terms of assembly, part of the 30S ribosomal subunit.

Binds the lower part of the 30S subunit head. In Methanoculleus marisnigri (strain ATCC 35101 / DSM 1498 / JR1), this protein is Small ribosomal subunit protein uS3.